A 246-amino-acid polypeptide reads, in one-letter code: Acetoacetate decarboxylase (246 aa).

Lys116 functions as the Schiff-base intermediate with acetoacetate in the catalytic mechanism.

This sequence belongs to the ADC family.

The catalysed reaction is acetoacetate + H(+) = acetone + CO2. Functionally, catalyzes the conversion of acetoacetate to acetone and carbon dioxide. The chain is Acetoacetate decarboxylase from Burkholderia cenocepacia (strain HI2424).